The chain runs to 134 residues: MYRTLLKSKVHRIKITGADLHYEGSLTLDEEIMEAANLIPFEKIEVYNVNNGQRFSTYVIPGVRYSGECILNGAAARLGHYGDIIIIASYAAVNEKDLESFKVNLVYIDENTNTIKEKKEVLALNSKVLAKTNE.

S25 functions as the Schiff-base intermediate with substrate; via pyruvic acid in the catalytic mechanism. S25 is subject to Pyruvic acid (Ser). T57 is a binding site for substrate. Catalysis depends on Y58, which acts as the Proton donor. 73-75 (GAA) provides a ligand contact to substrate.

Belongs to the PanD family. Heterooctamer of four alpha and four beta subunits. The cofactor is pyruvate. Is synthesized initially as an inactive proenzyme, which is activated by self-cleavage at a specific serine bond to produce a beta-subunit with a hydroxyl group at its C-terminus and an alpha-subunit with a pyruvoyl group at its N-terminus.

It is found in the cytoplasm. The enzyme catalyses L-aspartate + H(+) = beta-alanine + CO2. The protein operates within cofactor biosynthesis; (R)-pantothenate biosynthesis; beta-alanine from L-aspartate: step 1/1. In terms of biological role, catalyzes the pyruvoyl-dependent decarboxylation of aspartate to produce beta-alanine. This chain is Aspartate 1-decarboxylase, found in Sulfurihydrogenibium sp. (strain YO3AOP1).